Here is a 716-residue protein sequence, read N- to C-terminus: uncharacterized protein (716 aa).

2 disordered regions span residues Ser84–Pro103 and Val153–Gln189. Ser97 is modified (phosphoserine). Glycyl lysine isopeptide (Lys-Gly) (interchain with G-Cter in SUMO2) cross-links involve residues Lys201, Lys204, Lys237, Lys283, and Lys626.

This is an uncharacterized protein from Homo sapiens (Human).